We begin with the raw amino-acid sequence, 154 residues long: Deoxyuridine 5'-triphosphate nucleotidohydrolase (154 aa).

Substrate contacts are provided by residues 64-66, Asn77, 81-83, and Lys91; these read RSG and TVD. A disordered region spans residues 135–154; sequence LADTTRGDGGHGSSGGHASL. Residues 144-154 are compositionally biased toward gly residues; the sequence is GHGSSGGHASL.

It belongs to the dUTPase family. Homotrimer. Mg(2+) is required as a cofactor.

The catalysed reaction is dUTP + H2O = dUMP + diphosphate + H(+). It participates in pyrimidine metabolism; dUMP biosynthesis; dUMP from dCTP (dUTP route): step 2/2. In terms of biological role, this enzyme is involved in nucleotide metabolism: it produces dUMP, the immediate precursor of thymidine nucleotides and it decreases the intracellular concentration of dUTP so that uracil cannot be incorporated into DNA. The chain is Deoxyuridine 5'-triphosphate nucleotidohydrolase from Mycolicibacterium vanbaalenii (strain DSM 7251 / JCM 13017 / BCRC 16820 / KCTC 9966 / NRRL B-24157 / PYR-1) (Mycobacterium vanbaalenii).